Reading from the N-terminus, the 192-residue chain is Secreted and transmembrane protein 1A (192 aa).

Positions 1-27 (MMTCPSVPAIPTLWLFSILLLVVSLNA) are cleaved as a signal peptide. The Extracellular segment spans residues 28–165 (QNKSWDNPIC…SSPIEGKPGT (138 aa)). Asparagine 29, asparagine 55, asparagine 84, and asparagine 127 each carry an N-linked (GlcNAc...) asparagine glycan. Residues 166–186 (LVGVITVIFILGVAGFITFIY) form a helical membrane-spanning segment. At 187 to 192 (YRHRRS) the chain is on the cytoplasmic side.

It belongs to the SECTM family.

The protein localises to the cell membrane. The protein resides in the secreted. This is Secreted and transmembrane protein 1A from Mus musculus (Mouse).